The sequence spans 539 residues: Beta-apo-4'-carotenal oxygenase (539 aa).

Active-site residues include E228 and C262.

It belongs to the aldehyde dehydrogenase family.

It catalyses the reaction 4'-apo-beta-carotenal + NAD(+) + H2O = neurosporaxanthin + NADH + 2 H(+). Its function is as follows. Beta-apo-4'-carotenal oxygenase involved in the last step of synthesis of neurosporaxanthin, a carboxylic apocarotenoid acting as an essential protective pigments and leading to orange pigmentation. Converts the aldehyde beta-apo-4'-carotenal into neurosporaxanthin. Is also able to use shorter apocarotenals as substrates (such as beta-apo-8'-carotenal (C30), beta-apo-10'-carotenal (C27), or the acyclic apocarotenal apo-8'-lycopenal (C30)), indicating wide substrate specificity. Neurosporaxanthin is synthesized from geranyl-geranyl pyrophosphate (GGPP) through several enzymatic activities. Phytoene synthase activity performed by the bifunctional enzyme carAR first produces phytoene from geranyl-geranyl pyrophosphate (GGPP). The phytoene dehydrogenase carB then introduces 4 desaturations to lead to lycopene which is substrate of the carotene cyclase activity of carAR that leads to the production of gamma-carotene. CarB then performs a 5th desaturation reaction to yield torulene. Torulene is the substrate of the dioxidase carT that breaks the molecule, removing five carbon atoms to yield beta-apo-4'-carotenal, whereas the aldehyde dehydrogenase carD mediates the last step by converting beta-apo-4'-carotenal into neurosporaxanthin. The polypeptide is Beta-apo-4'-carotenal oxygenase (Gibberella fujikuroi (strain CBS 195.34 / IMI 58289 / NRRL A-6831) (Bakanae and foot rot disease fungus)).